A 177-amino-acid polypeptide reads, in one-letter code: MKSRIHVLQGDITQLAVDVIVNAANSSLMGGGGVDGAIHRAAGPELLEACQKVRRQQGECPTGHAVITIAGNLPARAVIHTVGPVWRDGEHNEDQLLHDAYLNSLKLAQANGYKSIAFPAISTGVYGFPRAAAAEIAVKTVSDFITRHALPEQIYFVCYDEENSRLYNRLLTQQGDE.

In terms of domain architecture, Macro spans 1–175 (MKSRIHVLQG…LYNRLLTQQG (175 aa)). Substrate is bound by residues 11 to 12 (DI), Asn-25, 33 to 35 (GVD), and 122 to 126 (STGVY). Catalysis depends on Asp-35, which acts as the Proton acceptor.

Belongs to the MacroD-type family. YmdB subfamily. As to quaternary structure, homodimer. Interacts with RNase III.

The catalysed reaction is 3''-O-acetyl-ADP-D-ribose + H2O = ADP-D-ribose + acetate + H(+). It carries out the reaction 2''-O-acetyl-ADP-D-ribose + H2O = ADP-D-ribose + acetate + H(+). In terms of biological role, deacetylates O-acetyl-ADP ribose to yield ADP-ribose and free acetate. Down-regulates ribonuclease 3 (RNase III) activity. Acts by interacting directly with the region of the ribonuclease that is required for dimerization/activation. The chain is O-acetyl-ADP-ribose deacetylase from Escherichia fergusonii (strain ATCC 35469 / DSM 13698 / CCUG 18766 / IAM 14443 / JCM 21226 / LMG 7866 / NBRC 102419 / NCTC 12128 / CDC 0568-73).